The chain runs to 372 residues: NAD(P)H-quinone oxidoreductase subunit 1 (372 aa).

8 helical membrane passes run 27 to 47 (MLWL…GVLV), 97 to 117 (ILFT…WLIV), 128 to 148 (VGVG…GLLM), 166 to 186 (AAQS…VVMM), 204 to 224 (VLSW…ICAL), 266 to 286 (VLSA…PIPV), 308 to 328 (TVGI…AILL), and 347 to 367 (FLLP…LAFP).

It belongs to the complex I subunit 1 family. NDH-1 is composed of at least 11 different subunits.

It localises to the cellular thylakoid membrane. The catalysed reaction is a plastoquinone + NADH + (n+1) H(+)(in) = a plastoquinol + NAD(+) + n H(+)(out). The enzyme catalyses a plastoquinone + NADPH + (n+1) H(+)(in) = a plastoquinol + NADP(+) + n H(+)(out). Functionally, NDH-1 shuttles electrons from an unknown electron donor, via FMN and iron-sulfur (Fe-S) centers, to quinones in the respiratory and/or the photosynthetic chain. The immediate electron acceptor for the enzyme in this species is believed to be plastoquinone. Couples the redox reaction to proton translocation, and thus conserves the redox energy in a proton gradient. This chain is NAD(P)H-quinone oxidoreductase subunit 1, found in Synechococcus sp. (strain CC9311).